Reading from the N-terminus, the 265-residue chain is Serine protease ami (265 aa).

Positions 1–21 are cleaved as a signal peptide; the sequence is MNVSWALLAVVLVLTVATYEC. A glycan (N-linked (GlcNAc...) asparagine) is linked at Asn-2. A propeptide spans 22–26 (activation peptide); that stretch reads RPRGR. One can recognise a Peptidase S1 domain in the interval 27–254; that stretch reads ILGGQDSKAE…YKSWIMESMY (228 aa). Cys-52 and Cys-68 are joined by a disulfide. His-67 acts as the Charge relay system in catalysis. N-linked (GlcNAc...) asparagine glycosylation is found at Asn-71, Asn-74, and Asn-108. The Charge relay system role is filled by Asp-115. Disulfide bonds link Cys-149/Cys-215, Cys-180/Cys-196, and Cys-205/Cys-230. Catalysis depends on Ser-209, which acts as the Charge relay system. Asn-255 is a glycosylation site (N-linked (GlcNAc...) asparagine).

Belongs to the peptidase S1 family.

The protein resides in the secreted. In terms of biological role, probable serine protease. The sequence is that of Serine protease ami from Xenopus tropicalis (Western clawed frog).